Reading from the N-terminus, the 331-residue chain is UPF0194 membrane protein YbhG (331 aa).

The signal sequence occupies residues 1–15 (MKKPVVIGLAVVVLA). Residues 107-208 (EEIAQAAAAV…LNLQDSTLIA (102 aa)) adopt a coiled-coil conformation.

It belongs to the UPF0194 family.

It is found in the periplasm. This chain is UPF0194 membrane protein YbhG, found in Escherichia coli O139:H28 (strain E24377A / ETEC).